The primary structure comprises 101 residues: NADH-quinone oxidoreductase subunit K (101 aa).

3 helical membrane passes run 4–24 (LGYFLIIGAILFGLGFAGIII), 30–50 (IVLLMCIELMLLAVNTNFIAF), and 61–81 (IFVFFILTVAAAESAIGLAIL).

It belongs to the complex I subunit 4L family. In terms of assembly, NDH-1 is composed of 14 different subunits. Subunits NuoA, H, J, K, L, M, N constitute the membrane sector of the complex.

Its subcellular location is the cell inner membrane. It catalyses the reaction a quinone + NADH + 5 H(+)(in) = a quinol + NAD(+) + 4 H(+)(out). Its function is as follows. NDH-1 shuttles electrons from NADH, via FMN and iron-sulfur (Fe-S) centers, to quinones in the respiratory chain. The immediate electron acceptor for the enzyme in this species is believed to be ubiquinone. Couples the redox reaction to proton translocation (for every two electrons transferred, four hydrogen ions are translocated across the cytoplasmic membrane), and thus conserves the redox energy in a proton gradient. The sequence is that of NADH-quinone oxidoreductase subunit K from Coxiella burnetii (strain CbuG_Q212) (Coxiella burnetii (strain Q212)).